Reading from the N-terminus, the 180-residue chain is MVRESIPKEGENIKIQSYKHDGKIHRVWSETTILKGTDHVVIGGNDHTLVTESDGRTWITREPAIVYFHSEYWFNVICMFREDGIYYYCNLSSPFVCDEEALKYIDYDLDIKVYPNGKYHLLDEDEYEQHMNQMNYPHDIDIILRRNVDILQQWIEQKKGPFAPDFIKVWKDRYKKIRQY.

The Proton donor role is filled by arginine 26. Mg(2+) is bound by residues asparagine 90, aspartate 106, aspartate 108, aspartate 110, aspartate 123, and glutamate 126.

It belongs to the Ntdp family. Mg(2+) is required as a cofactor.

It carries out the reaction a ribonucleoside 5'-triphosphate + H2O = a ribonucleoside 5'-diphosphate + phosphate + H(+). The catalysed reaction is a ribonucleoside 5'-diphosphate + H2O = a ribonucleoside 5'-phosphate + phosphate + H(+). In terms of biological role, has nucleoside phosphatase activity towards nucleoside triphosphates and nucleoside diphosphates. This Staphylococcus aureus (strain MRSA252) protein is Nucleoside triphosphate/diphosphate phosphatase.